Consider the following 201-residue polypeptide: LexA repressor 1 (201 aa).

Positions 27-47 form a DNA-binding region, H-T-H motif; sequence LAEIAQAFGFASRNAAQKHVQ. Residues Ser122 and Lys159 each act as for autocatalytic cleavage activity in the active site.

This sequence belongs to the peptidase S24 family. Homodimer.

The enzyme catalyses Hydrolysis of Ala-|-Gly bond in repressor LexA.. Functionally, represses a number of genes involved in the response to DNA damage (SOS response), including recA and lexA. In the presence of single-stranded DNA, RecA interacts with LexA causing an autocatalytic cleavage which disrupts the DNA-binding part of LexA, leading to derepression of the SOS regulon and eventually DNA repair. The polypeptide is LexA repressor 1 (Xanthomonas oryzae pv. oryzae (strain KACC10331 / KXO85)).